The chain runs to 350 residues: Geranylgeranyl diphosphate synthase (350 aa).

The isopentenyl diphosphate site is built by Lys70, Arg73, and His102. Mg(2+) is bound by residues Asp109 and Asp113. Positions 109–113 match the DDXXD motif motif; the sequence is DDVMD. Arg119 contributes to the isopentenyl diphosphate binding site. The DDXXD motif signature appears at 240 to 244; the sequence is DDLIG.

The protein belongs to the FPP/GGPP synthase family. Mg(2+) serves as cofactor.

It carries out the reaction isopentenyl diphosphate + (2E,6E)-farnesyl diphosphate = (2E,6E,10E)-geranylgeranyl diphosphate + diphosphate. It participates in isoprenoid biosynthesis; geranylgeranyl diphosphate biosynthesis; geranylgeranyl diphosphate from farnesyl diphosphate and isopentenyl diphosphate: step 1/1. In terms of biological role, catalyzes the condensation of isopentenyl pyrophosphate (IPP) with (2E,6E)-farnesyl diphosphate (E,E-FPP) to yield geranylgeranyl diphosphate (GGPP). The sequence is that of Geranylgeranyl diphosphate synthase from Mycobacterium tuberculosis (strain ATCC 25618 / H37Rv).